The sequence spans 520 residues: Flavin-dependent halogenase radH (520 aa).

Gly14, Ala17, and Glu47 together coordinate FAD. The chloride site is built by Ser330 and Gly331.

It belongs to the flavin-dependent halogenase family.

Its pathway is secondary metabolite biosynthesis. In terms of biological role, non-heme halogenase; part of the gene cluster that mediates the biosynthesis of radicicol, a resorcylic acid lactone (RAL) that irreversibly inhibits the HSP90 molecular chaperone, an important target for cancer chemotherapy. The cluster encodes only two apparent post-PKS enzymes, a cytochrome P450 monooxygenase (radP) and a non-heme halogenase (radH) that introduce the epoxide and the chlorine, respectively. If this cluster includes all the genes required for radicicol biosynthesis, the remaining structural features of radicicol are presumably generated by the PKSs rads1 and rads2. The C-2' ketone could arise if the R-PKS rads1 and NR-PKS rads2 each carry out four iterations, in contrast to the five iteration-three iteration split for the hypothemycin PKSs. The origin of the cis 5',6' double bond is not known. The radicicol R-PKS rads1 ER domain may catalyze either double bond isomerization or reduction in the third iteration. The chain is Flavin-dependent halogenase radH from Floropilus chiversii (Chaetomium chiversii).